We begin with the raw amino-acid sequence, 87 residues long: Insertion element IS407 uncharacterized 10.0 kDa protein (87 aa).

It belongs to the transposase 8 family.

The sequence is that of Insertion element IS407 uncharacterized 10.0 kDa protein from Burkholderia multivorans (strain ATCC 17616 / 249).